The sequence spans 452 residues: Aspartyl/glutamyl-tRNA(Asn/Gln) amidotransferase subunit B (452 aa).

This sequence belongs to the GatB/GatE family. GatB subfamily. Heterotrimer of A, B and C subunits.

It catalyses the reaction L-glutamyl-tRNA(Gln) + L-glutamine + ATP + H2O = L-glutaminyl-tRNA(Gln) + L-glutamate + ADP + phosphate + H(+). It carries out the reaction L-aspartyl-tRNA(Asn) + L-glutamine + ATP + H2O = L-asparaginyl-tRNA(Asn) + L-glutamate + ADP + phosphate + 2 H(+). Functionally, allows the formation of correctly charged Asn-tRNA(Asn) or Gln-tRNA(Gln) through the transamidation of misacylated Asp-tRNA(Asn) or Glu-tRNA(Gln) in organisms which lack either or both of asparaginyl-tRNA or glutaminyl-tRNA synthetases. The reaction takes place in the presence of glutamine and ATP through an activated phospho-Asp-tRNA(Asn) or phospho-Glu-tRNA(Gln). In Methanosphaera stadtmanae (strain ATCC 43021 / DSM 3091 / JCM 11832 / MCB-3), this protein is Aspartyl/glutamyl-tRNA(Asn/Gln) amidotransferase subunit B.